The sequence spans 820 residues: Phospholipase D alpha 3 (820 aa).

In terms of domain architecture, C2 spans 1–133; sequence MTEQLLLHGT…ITGQPIDRWL (133 aa). Residue aspartate 194 participates in Ca(2+) binding. The PLD phosphodiesterase 1 domain occupies 334–371; sequence TMFTHHQKTIVVDSEVDGSLTKRRIVSFLGGIDLCDGR. Residues histidine 339, lysine 341, and aspartate 346 contribute to the active site. Histidine 339 is an a 1,2-diacyl-sn-glycero-3-phosphate binding site. Residues histidine 377 and histidine 411 each contribute to the Ca(2+) site. 2 residues coordinate a 1,2-diacyl-sn-glycero-3-phosphate: glutamine 528 and histidine 667. A PLD phosphodiesterase 2 domain is found at 662–689; the sequence is FMIYVHSKMMIVDDEYIIIGSANINQRS. Residues histidine 667, lysine 669, and aspartate 674 contribute to the active site. A Ca(2+)-binding site is contributed by glutamate 730.

Belongs to the phospholipase D family. C2-PLD subfamily. Ca(2+) is required as a cofactor. As to expression, expressed in buds, flowers, siliques, stems, old leaves and roots. Expressed in the sieve elements.

Its subcellular location is the cytoplasm. The protein localises to the membrane. It catalyses the reaction a 1,2-diacyl-sn-glycero-3-phosphocholine + H2O = a 1,2-diacyl-sn-glycero-3-phosphate + choline + H(+). In terms of biological role, hydrolyzes glycerol-phospholipids at the terminal phosphodiesteric bond to generate phosphatidic acids (PA). Active with phosphatidylcholine (PC), phosphatidylethanolamine (PE), phosphatidylglycerol (PG), and phosphatidylserine (PS) as substrates. No activity toward phosphatidylinositol (PI) or PIP2. Positively mediates plant responses to hyperosmotic stresses and promotes root growth, flowering, and stress avoidance. Not involved in the abscisic acid regulation of stomatal movement and transpirational water loss. This Arabidopsis thaliana (Mouse-ear cress) protein is Phospholipase D alpha 3.